An 81-amino-acid chain; its full sequence is RNA-binding protein KhpA (81 aa).

The 48-residue stretch at 34–81 folds into the KH domain; that stretch reads KIALRLSVHKSDTGKVIGKQGRTAKAIRTAVFAAGVQSSKKVQFEIFD.

It belongs to the KhpA RNA-binding protein family. Forms a complex with KhpB.

It is found in the cytoplasm. Its function is as follows. A probable RNA chaperone. Forms a complex with KhpB which binds to cellular RNA and controls its expression. Plays a role in peptidoglycan (PG) homeostasis and cell length regulation. The polypeptide is RNA-binding protein KhpA (Bacillus subtilis (strain 168)).